The sequence spans 135 residues: uncharacterized protein (135 aa).

This is an uncharacterized protein from Aquifex aeolicus (strain VF5).